Reading from the N-terminus, the 330-residue chain is Endo-1,4-beta-xylanase (330 aa).

Positions 2 to 330 (CSSIPSLREV…KPAFWRVVNI (329 aa)) constitute a GH10 domain. Residue E133 is the Proton donor of the active site. The active-site Nucleophile is the E240.

It belongs to the glycosyl hydrolase 10 (cellulase F) family. Cytoplasmic xylanase subfamily.

The protein resides in the cytoplasm. It carries out the reaction Endohydrolysis of (1-&gt;4)-beta-D-xylosidic linkages in xylans.. It participates in glycan degradation; xylan degradation. This chain is Endo-1,4-beta-xylanase (xynA), found in Geobacillus stearothermophilus (Bacillus stearothermophilus).